The primary structure comprises 305 residues: Protoheme IX farnesyltransferase (305 aa).

Helical transmembrane passes span 31 to 51, 53 to 73, 98 to 118, 124 to 144, 153 to 173, 181 to 201, 221 to 241, 242 to 262, and 285 to 305; these read IQVLLLITTAGAMWIAGKGHV, PLLLLVTLLGGTLAASSANAF, ILPWQAALFATALGVASFAVL, LFAALLAISGIGFYVVIYTLW, IVIGGAAGAIPPLVGWAAVTG, VLFGIIFMWTPPHFWALAMMI, ATARQIFIYTLVLVPVTLVLY, PLGTMGWIYLLAAGALGLWLI, and SIFYLMLLFVAMGIDSIFLFA.

Belongs to the UbiA prenyltransferase family. Protoheme IX farnesyltransferase subfamily.

It is found in the cell inner membrane. The enzyme catalyses heme b + (2E,6E)-farnesyl diphosphate + H2O = Fe(II)-heme o + diphosphate. The protein operates within porphyrin-containing compound metabolism; heme O biosynthesis; heme O from protoheme: step 1/1. Functionally, converts heme B (protoheme IX) to heme O by substitution of the vinyl group on carbon 2 of heme B porphyrin ring with a hydroxyethyl farnesyl side group. The polypeptide is Protoheme IX farnesyltransferase (Gloeobacter violaceus (strain ATCC 29082 / PCC 7421)).